The sequence spans 393 residues: Acetate kinase (393 aa).

Asparagine 10 serves as a coordination point for Mg(2+). ATP is bound at residue lysine 17. Substrate is bound at residue arginine 89. Aspartate 146 acts as the Proton donor/acceptor in catalysis. ATP contacts are provided by residues 204-208 (HLGNG), 278-280 (DMR), and 323-327 (GVGEN). Glutamate 376 is a Mg(2+) binding site.

This sequence belongs to the acetokinase family. As to quaternary structure, homodimer. Mg(2+) serves as cofactor. Mn(2+) is required as a cofactor.

Its subcellular location is the cytoplasm. It catalyses the reaction acetate + ATP = acetyl phosphate + ADP. It participates in metabolic intermediate biosynthesis; acetyl-CoA biosynthesis; acetyl-CoA from acetate: step 1/2. Its function is as follows. Catalyzes the formation of acetyl phosphate from acetate and ATP. Can also catalyze the reverse reaction. This is Acetate kinase from Mycoplasma genitalium (strain ATCC 33530 / DSM 19775 / NCTC 10195 / G37) (Mycoplasmoides genitalium).